The following is a 371-amino-acid chain: Cytochrome b (371 aa).

The next 4 helical transmembrane spans lie at 25–45, 69–90, 105–125, and 170–190; these read FGSM…FLAV, WMMQ…YIHI, WMSG…GYVL, and FFAL…LHVI. Heme b is bound by residues His75 and His89. Heme b contacts are provided by His174 and His188. His193 contacts a ubiquinone. The next 4 helical transmembrane spans lie at 218-238, 280-300, 312-332, and 339-358; these read HKDL…VSFF, LGGA…PFTH, LSQL…WAAT, and FITI…LSIP.

Belongs to the cytochrome b family. The cytochrome bc1 complex contains 3 respiratory subunits (MT-CYB, CYC1 and UQCRFS1), 2 core proteins (UQCRC1 and UQCRC2) and probably 6 low-molecular weight proteins. The cofactor is heme b.

It localises to the mitochondrion inner membrane. Its function is as follows. Component of the ubiquinol-cytochrome c reductase complex (complex III or cytochrome b-c1 complex) that is part of the mitochondrial respiratory chain. The b-c1 complex mediates electron transfer from ubiquinol to cytochrome c. Contributes to the generation of a proton gradient across the mitochondrial membrane that is then used for ATP synthesis. The sequence is that of Cytochrome b (MT-CYB) from Liasis mackloti savuensis (Savu python).